The following is a 328-amino-acid chain: Ribosomal RNA small subunit methyltransferase H (328 aa).

S-adenosyl-L-methionine contacts are provided by residues 35–37, D60, F87, D113, and Q120; that span reads GSH.

Belongs to the methyltransferase superfamily. RsmH family.

The protein localises to the cytoplasm. The enzyme catalyses cytidine(1402) in 16S rRNA + S-adenosyl-L-methionine = N(4)-methylcytidine(1402) in 16S rRNA + S-adenosyl-L-homocysteine + H(+). Functionally, specifically methylates the N4 position of cytidine in position 1402 (C1402) of 16S rRNA. In Chlorobium chlorochromatii (strain CaD3), this protein is Ribosomal RNA small subunit methyltransferase H.